The sequence spans 468 residues: Zinc finger protein 672 (468 aa).

C2H2-type zinc fingers lie at residues 15–37 (YSCS…ERAH), 43–65 (FRCL…RWTH), 71–93 (YICS…LGTH), and 100–123 (CPCR…VRQH). The C2H2-type 5; degenerate zinc-finger motif lies at 129 to 151 (HRCPLCARSFRQSALPFHLARAH). 9 consecutive C2H2-type zinc fingers follow at residues 167 to 189 (YHCT…SRIH), 202 to 224 (HRCG…LQRH), 230 to 252 (FKCP…QRTH), 258 to 280 (YACN…QRSH), 286 to 308 (HICA…QRSH), 314 to 336 (FPCP…LRTH), 342 to 364 (YHCE…LRNH), 370 to 392 (HKCP…RKTH), and 398 to 420 (AECT…QRSH).

The protein belongs to the krueppel C2H2-type zinc-finger protein family.

The protein localises to the nucleus. In terms of biological role, may be involved in transcriptional regulation. The sequence is that of Zinc finger protein 672 (Znf672) from Rattus norvegicus (Rat).